The primary structure comprises 537 residues: Multidrug resistance protein Stp (537 aa).

14 helical membrane-spanning segments follow: residues 6–26 (LLTL…ALIV), 46–66 (WVVA…ATLA), 77–97 (IGVS…SIAV), 104–124 (AQGL…SAAF), 136–156 (IWTA…GLLV), 163–183 (SIFY…LCYV), 200–220 (LLFI…PQIG), 223–243 (SVQT…FVWL), 262–282 (YALA…MLLL), 300–320 (LMIL…GHLV), 327–347 (VPIL…IFSE), 352–372 (ALVL…LTPI), 397–417 (AIGS…WLSA), and 478–498 (VALL…WRWF).

This sequence belongs to the major facilitator superfamily. EmrB family.

The protein resides in the cell membrane. This Mycobacterium tuberculosis (strain CDC 1551 / Oshkosh) protein is Multidrug resistance protein Stp (stp).